A 285-amino-acid polypeptide reads, in one-letter code: S-methyl-5'-thioadenosine phosphorylase (285 aa).

Phosphate contacts are provided by residues S10, 52-53 (RH), and 85-86 (TA). M188 contributes to the substrate binding site. T189 contacts phosphate. 212–214 (DYD) contributes to the substrate binding site.

The protein belongs to the PNP/MTAP phosphorylase family. MTAP subfamily. Homotrimer.

Its subcellular location is the cytoplasm. The protein resides in the nucleus. The enzyme catalyses S-methyl-5'-thioadenosine + phosphate = 5-(methylsulfanyl)-alpha-D-ribose 1-phosphate + adenine. Its pathway is amino-acid biosynthesis; L-methionine biosynthesis via salvage pathway; S-methyl-5-thio-alpha-D-ribose 1-phosphate from S-methyl-5'-thioadenosine (phosphorylase route): step 1/1. Its function is as follows. Catalyzes the reversible phosphorylation of S-methyl-5'-thioadenosine (MTA) to adenine and 5-methylthioribose-1-phosphate. Involved in the breakdown of MTA, a major by-product of polyamine biosynthesis. Responsible for the first step in the methionine salvage pathway after MTA has been generated from S-adenosylmethionine. Has broad substrate specificity with 6-aminopurine nucleosides as preferred substrates. This is S-methyl-5'-thioadenosine phosphorylase from Caenorhabditis briggsae.